Here is a 156-residue protein sequence, read N- to C-terminus: ATP synthase subunit b 2 (156 aa).

Residues 11-31 traverse the membrane as a helical segment; it reads LLAFIFFVWFCMKFVWPPIMG.

Belongs to the ATPase B chain family. As to quaternary structure, F-type ATPases have 2 components, F(1) - the catalytic core - and F(0) - the membrane proton channel. F(1) has five subunits: alpha(3), beta(3), gamma(1), delta(1), epsilon(1). F(0) has three main subunits: a(1), b(2) and c(10-14). The alpha and beta chains form an alternating ring which encloses part of the gamma chain. F(1) is attached to F(0) by a central stalk formed by the gamma and epsilon chains, while a peripheral stalk is formed by the delta and b chains.

Its subcellular location is the cell inner membrane. Its function is as follows. F(1)F(0) ATP synthase produces ATP from ADP in the presence of a proton or sodium gradient. F-type ATPases consist of two structural domains, F(1) containing the extramembraneous catalytic core and F(0) containing the membrane proton channel, linked together by a central stalk and a peripheral stalk. During catalysis, ATP synthesis in the catalytic domain of F(1) is coupled via a rotary mechanism of the central stalk subunits to proton translocation. In terms of biological role, component of the F(0) channel, it forms part of the peripheral stalk, linking F(1) to F(0). The polypeptide is ATP synthase subunit b 2 (Pseudoalteromonas atlantica (strain T6c / ATCC BAA-1087)).